The following is a 273-amino-acid chain: Dermonecrotic toxin LapSicTox-alphaII1 (273 aa).

His5 is a catalytic residue. Positions 25 and 27 each coordinate Mg(2+). His41 acts as the Nucleophile in catalysis. 2 disulfide bridges follow: Cys45–Cys51 and Cys47–Cys191. Mg(2+) is bound at residue Asp85.

The protein belongs to the arthropod phospholipase D family. Class II subfamily. The cofactor is Mg(2+). As to expression, expressed by the venom gland.

The protein localises to the secreted. It catalyses the reaction an N-(acyl)-sphingosylphosphocholine = an N-(acyl)-sphingosyl-1,3-cyclic phosphate + choline. The enzyme catalyses an N-(acyl)-sphingosylphosphoethanolamine = an N-(acyl)-sphingosyl-1,3-cyclic phosphate + ethanolamine. The catalysed reaction is a 1-acyl-sn-glycero-3-phosphocholine = a 1-acyl-sn-glycero-2,3-cyclic phosphate + choline. It carries out the reaction a 1-acyl-sn-glycero-3-phosphoethanolamine = a 1-acyl-sn-glycero-2,3-cyclic phosphate + ethanolamine. Its function is as follows. Dermonecrotic toxins cleave the phosphodiester linkage between the phosphate and headgroup of certain phospholipids (sphingolipid and lysolipid substrates), forming an alcohol (often choline) and a cyclic phosphate. This toxin acts on sphingomyelin (SM). It may also act on ceramide phosphoethanolamine (CPE), lysophosphatidylcholine (LPC) and lysophosphatidylethanolamine (LPE), but not on lysophosphatidylserine (LPS), and lysophosphatidylglycerol (LPG). It acts by transphosphatidylation, releasing exclusively cyclic phosphate products as second products. Induces dermonecrosis, hemolysis, increased vascular permeability, edema, inflammatory response, and platelet aggregation. This is Dermonecrotic toxin LapSicTox-alphaII1 from Loxosceles apachea (Apache recluse spider).